The sequence spans 1308 residues: Misshapen-like kinase 1 (1308 aa).

A Protein kinase domain is found at 25–289 (FELVEVVGNG…TEQLLKFPFI (265 aa)). ATP contacts are provided by residues 31–39 (VGNGTYGQV) and Lys54. The active-site Proton acceptor is Asp153. Disordered regions lie at residues 299 to 347 (RIQL…NVPG), 363 to 383 (KSNS…QRDP), and 395 to 862 (QRRI…GGTM). Residues 317 to 333 (EETEYEYSGSEEEDDSH) show a composition bias toward acidic residues. 2 positions are modified to phosphoserine: Ser324 and Ser326. Residues 371–380 (QQQQLQQQQQ) are compositionally biased toward low complexity. Residues 396–466 (RRIEEQKEER…EEQRQSERLQ (71 aa)) are compositionally biased toward basic and acidic residues. The span at 479 to 497 (LQQQQQQQQLQKQQQQQQQ) shows a compositional bias: low complexity. Arg503 and Arg511 each carry omega-N-methylarginine. Residues 520-530 (AWAREVEERAR) show a composition bias toward basic and acidic residues. Over residues 600-610 (RSQSLQDQPTR) the composition is skewed to polar residues. Residues 623–633 (PAAVPTPTATP) show a composition bias toward low complexity. Ser644 bears the Phosphoserine mark. Residues 673–685 (QRTSSIATALNTS) show a composition bias toward polar residues. Residues Asp702, Ser720, Ser729, Ser745, Ser746, and Ser750 each carry the phosphoserine modification. Basic and acidic residues predominate over residues 702-714 (DLRRSDPGWERSD). A compositionally biased stretch (basic and acidic residues) spans 773–797 (AIGEDFVLLKERTLDEAPKPPKKAM). A compositionally biased stretch (acidic residues) spans 804–820 (EEVESSEEEEEEGDGEP). The segment at 842–1308 (MVVHDVEEIS…TLNRNCIMNW (467 aa)) is mediates interaction with RAP2A. Residue Thr867 is modified to Phosphothreonine. The tract at residues 881–918 (GYTNLPDVVQPSHSPTENSKGQSPPTKDGGSDYQSRGL) is disordered. The span at 891–905 (PSHSPTENSKGQSPP) shows a compositional bias: polar residues. One can recognise a CNH domain in the interval 995–1282 (NSEILCAALW…KFLCERNDKV (288 aa)).

It belongs to the protein kinase superfamily. STE Ser/Thr protein kinase family. STE20 subfamily. In terms of assembly, interacts with RAP2A and TANC1. Interacts with NCK1. It depends on Mg(2+) as a cofactor. Autophosphorylated. As to expression, appears to be ubiquitous, expressed in all tissue types examined. Highly expressed in the brain, moderately expressed in kidney and spleen, low levels present in heart and skeletal muscle. Isoform 2 is more abundant in the brain than isoform 1.

Its subcellular location is the cytoplasm. The protein localises to the postsynaptic density. It localises to the cell projection. The protein resides in the axon. It is found in the dendrite. The catalysed reaction is L-seryl-[protein] + ATP = O-phospho-L-seryl-[protein] + ADP + H(+). It catalyses the reaction L-threonyl-[protein] + ATP = O-phospho-L-threonyl-[protein] + ADP + H(+). In terms of biological role, serine/threonine kinase which acts as a negative regulator of Ras-related Rap2-mediated signal transduction to control neuronal structure and AMPA receptor trafficking. Required for normal synaptic density, dendrite complexity, as well as surface AMPA receptor expression in hippocampal neurons. Can activate the JNK and MAPK14/p38 pathways and mediates stimulation of the stress-activated protein kinase MAPK14/p38 MAPK downstream of the Raf/ERK pathway. Phosphorylates TANC1 upon stimulation by RAP2A, MBP and SMAD1. Has an essential function in negative selection of thymocytes, perhaps by coupling NCK1 to activation of JNK1. Activator of the Hippo signaling pathway which plays a pivotal role in organ size control and tumor suppression by restricting proliferation and promoting apoptosis. MAP4Ks act in parallel to and are partially redundant with STK3/MST2 and STK4/MST2 in the phosphorylation and activation of LATS1/2, and establish MAP4Ks as components of the expanded Hippo pathway. In Mus musculus (Mouse), this protein is Misshapen-like kinase 1.